We begin with the raw amino-acid sequence, 768 residues long: Photosystem I P700 chlorophyll a apoprotein A1 (768 aa).

The next 8 helical transmembrane spans lie at 76-99 (VFSAHFGHLAVIFIWMSAAFFHGA), 162-185 (LMALAIGALLMAAIMLHGGIYHYH), 201-225 (LNHHIAGLVGLGSIAWAGHCIHIGA), 310-328 (ISHHHLAFGVLAVLGGHLY), 369-392 (WHAQLGLNLAMIGSLSIIISHHMY), 408-434 (LGLFTHHMWIGGLFIVGAAAHAGIAMI), 456-478 (ALISHLNWACMFLGFHSFGLYIH), and 559-577 (FMIHHIHAFTIHVTLLILL). Residues Cys601 and Cys610 each contribute to the [4Fe-4S] cluster site. Transmembrane regions (helical) follow at residues 617 to 638 (HVFLGLFWMYNGLSVVIFHFSW) and 682 to 704 (ISMYGLMFLGAHFVWAFSLMFLF). His693 is a divinylchlorophyll a' binding site. Divinyl chlorophyll a contacts are provided by Met701 and Tyr709. Trp710 provides a ligand contact to phylloquinone. The chain crosses the membrane as a helical span at residues 742–762 (AVGAAHFLLGGIATTWAFFHA).

It belongs to the PsaA/PsaB family. In terms of assembly, the PsaA/B heterodimer binds the P700 divinyl chlorophyll special pair and subsequent electron acceptors. PSI consists of a core antenna complex that captures photons, and an electron transfer chain that converts photonic excitation into a charge separation. The cyanobacterial PSI reaction center is composed of one copy each of PsaA,B,C,D,E,F,I,J,K,L,M and X, and forms trimeric complexes. Requires PSI electron transfer chain: 5 divinyl chlorophyll a, 1 divinyl chlorophyll a', 2 phylloquinones and 3 4Fe-4S clusters. PSI core antenna: 90 divinyl chlorophyll a, 22 carotenoids, 3 phospholipids and 1 galactolipid. P700 is a divinyl chlorophyll a/divinyl chlorophyll a' dimer, A0 is one or more divinyl chlorophyll a, A1 is one or both phylloquinones and FX is a shared 4Fe-4S iron-sulfur center. as cofactor.

Its subcellular location is the cellular thylakoid membrane. The enzyme catalyses reduced [plastocyanin] + hnu + oxidized [2Fe-2S]-[ferredoxin] = oxidized [plastocyanin] + reduced [2Fe-2S]-[ferredoxin]. In terms of biological role, psaA and PsaB bind P700, the primary electron donor of photosystem I (PSI), as well as the electron acceptors A0, A1 and FX. PSI is a plastocyanin/cytochrome c6-ferredoxin oxidoreductase, converting photonic excitation into a charge separation, which transfers an electron from the donor P700 chlorophyll pair to the spectroscopically characterized acceptors A0, A1, FX, FA and FB in turn. Oxidized P700 is reduced on the lumenal side of the thylakoid membrane by plastocyanin or cytochrome c6. In Prochlorococcus marinus (strain NATL2A), this protein is Photosystem I P700 chlorophyll a apoprotein A1.